Consider the following 580-residue polypeptide: Probable mediator of RNA polymerase II transcription subunit 26a (580 aa).

In terms of domain architecture, TFIIS N-terminal spans 108–183 (DEVMRIRDIL…AEWKRLVDQW (76 aa)). Basic and acidic residues-rich tracts occupy residues 244–255 (RHSVESKHERKS), 280–290 (QTRREEADVRP), and 299–309 (VEPKRQTKQSR). The disordered stretch occupies residues 244–337 (RHSVESKHER…RKLAGPQQDK (94 aa)). Residues 347–368 (FEFAKRKLQESYHQHENAKRQR) adopt a coiled-coil conformation.

The protein belongs to the Mediator complex subunit 26 family. As to quaternary structure, component of the Mediator complex.

Its subcellular location is the nucleus. Its function is as follows. Component of the Mediator complex, a coactivator involved in the regulated transcription of nearly all RNA polymerase II-dependent genes. Mediator functions as a bridge to convey information from gene-specific regulatory proteins to the basal RNA polymerase II transcription machinery. The Mediator complex, having a compact conformation in its free form, is recruited to promoters by direct interactions with regulatory proteins and serves for the assembly of a functional preinitiation complex with RNA polymerase II and the general transcription factors. May play a role in transcription elongation. The protein is Probable mediator of RNA polymerase II transcription subunit 26a (MED26A) of Arabidopsis thaliana (Mouse-ear cress).